The following is a 356-amino-acid chain: D-alanine--D-alanine ligase (356 aa).

The ATP-grasp domain occupies 134 to 339; it reads KQLFAHRGLP…YADLITKLIE (206 aa). 167 to 222 is an ATP binding site; it reads KDKLEFPVFVKPANLGSSVGISKCNNEEELKSGIEEAFQFDRKLVIEQGIEAREIE. Residues aspartate 293, glutamate 306, and asparagine 308 each coordinate Mg(2+).

This sequence belongs to the D-alanine--D-alanine ligase family. The cofactor is Mg(2+). Mn(2+) serves as cofactor.

The protein resides in the cytoplasm. It catalyses the reaction 2 D-alanine + ATP = D-alanyl-D-alanine + ADP + phosphate + H(+). The protein operates within cell wall biogenesis; peptidoglycan biosynthesis. In terms of biological role, cell wall formation. The polypeptide is D-alanine--D-alanine ligase (Staphylococcus carnosus (strain TM300)).